The following is a 195-amino-acid chain: Coiled-coil domain-containing protein 184 (195 aa).

Residues 39–68 adopt a coiled-coil conformation; it reads GMKELMEHLKAQLQALFEDVRAMRGALDEQ. The interval 98-175 is disordered; it reads RQGGLGVVGN…AGLLGGDGPL (78 aa). Acidic residues predominate over residues 135–146; it reads PEDEEDDDEEEK.

The sequence is that of Coiled-coil domain-containing protein 184 (CCDC184) from Bos taurus (Bovine).